We begin with the raw amino-acid sequence, 333 residues long: tRNA N6-adenosine threonylcarbamoyltransferase (333 aa).

Residues histidine 110 and histidine 114 each coordinate Fe cation. Substrate-binding positions include 133–137 (IVSGG), aspartate 166, glycine 179, aspartate 183, and asparagine 275. Aspartate 302 serves as a coordination point for Fe cation.

The protein belongs to the KAE1 / TsaD family. The cofactor is Fe(2+).

The protein resides in the cytoplasm. The enzyme catalyses L-threonylcarbamoyladenylate + adenosine(37) in tRNA = N(6)-L-threonylcarbamoyladenosine(37) in tRNA + AMP + H(+). In terms of biological role, required for the formation of a threonylcarbamoyl group on adenosine at position 37 (t(6)A37) in tRNAs that read codons beginning with adenine. Is involved in the transfer of the threonylcarbamoyl moiety of threonylcarbamoyl-AMP (TC-AMP) to the N6 group of A37, together with TsaE and TsaB. TsaD likely plays a direct catalytic role in this reaction. This Thermodesulfovibrio yellowstonii (strain ATCC 51303 / DSM 11347 / YP87) protein is tRNA N6-adenosine threonylcarbamoyltransferase.